A 706-amino-acid polypeptide reads, in one-letter code: Histone deacetylase HDA1 (706 aa).

The span at 1–24 (MDSVMVKKEVLENPDHDLKRKLEE) shows a compositional bias: basic and acidic residues. Residues 1–36 (MDSVMVKKEVLENPDHDLKRKLEENKEEENSLSTTS) are disordered. The histone deacetylase stretch occupies residues 67-396 (RYHAKIFTSY…ALSVAKVLIG (330 aa)). The active site involves histidine 206.

The protein belongs to the histone deacetylase family. HD type 2 subfamily.

It is found in the nucleus. It carries out the reaction N(6)-acetyl-L-lysyl-[histone] + H2O = L-lysyl-[histone] + acetate. Functionally, responsible for the deacetylation of lysine residues on the N-terminal part of the core histones (H2A, H2B, H3 and H4). Histone deacetylation gives a tag for epigenetic repression and plays an important role in transcriptional regulation, cell cycle progression and developmental events. Histone deacetylases act via the formation of large multiprotein complexes. The polypeptide is Histone deacetylase HDA1 (HDA1) (Saccharomyces cerevisiae (strain ATCC 204508 / S288c) (Baker's yeast)).